The following is a 187-amino-acid chain: Ribosome-recycling factor (187 aa).

The protein belongs to the RRF family.

It localises to the cytoplasm. In terms of biological role, responsible for the release of ribosomes from messenger RNA at the termination of protein biosynthesis. May increase the efficiency of translation by recycling ribosomes from one round of translation to another. The chain is Ribosome-recycling factor from Ligilactobacillus salivarius (strain UCC118) (Lactobacillus salivarius).